A 361-amino-acid chain; its full sequence is Lactate-binding periplasmic protein TTHA0766 (361 aa).

A signal peptide (tat-type signal) is located at residues Met1–Ala22. Substrate contacts are provided by Tyr101, Asn158, and Arg178. Asn158 serves as a coordination point for Ca(2+). The Ca(2+) site is built by Asp216, Phe217, and Gln247. Substrate contacts are provided by residues Phe217 and Gln247–Asp250.

Belongs to the bacterial solute-binding protein 7 family. As to quaternary structure, homodimer. The complex comprises the extracytoplasmic solute receptor protein TTHA0766, and the two putative transmembrane proteins TTHA0767 and TTHA0768.

The protein localises to the periplasm. Its function is as follows. Part of the tripartite ATP-independent periplasmic (TRAP) transport system involved in the uptake of lactate. This protein specifically binds L-lactate. In Thermus thermophilus (strain ATCC 27634 / DSM 579 / HB8), this protein is Lactate-binding periplasmic protein TTHA0766.